Consider the following 416-residue polypeptide: 3-phosphoshikimate 1-carboxyvinyltransferase (416 aa).

3 residues coordinate 3-phosphoshikimate: lysine 20, serine 21, and arginine 25. Lysine 20 lines the phosphoenolpyruvate pocket. Phosphoenolpyruvate-binding residues include glycine 88 and arginine 116. 6 residues coordinate 3-phosphoshikimate: serine 159, serine 160, glutamine 161, serine 186, aspartate 300, and lysine 327. Glutamine 161 lines the phosphoenolpyruvate pocket. Aspartate 300 (proton acceptor) is an active-site residue. Residues arginine 331 and arginine 373 each coordinate phosphoenolpyruvate.

The protein belongs to the EPSP synthase family. Monomer.

The protein localises to the cytoplasm. It carries out the reaction 3-phosphoshikimate + phosphoenolpyruvate = 5-O-(1-carboxyvinyl)-3-phosphoshikimate + phosphate. It participates in metabolic intermediate biosynthesis; chorismate biosynthesis. Catalyzes the transfer of the enolpyruvyl moiety of phosphoenolpyruvate (PEP) to the 5-hydroxyl of shikimate-3-phosphate (S3P) to produce enolpyruvyl shikimate-3-phosphate and inorganic phosphate. This chain is 3-phosphoshikimate 1-carboxyvinyltransferase, found in Archaeoglobus fulgidus (strain ATCC 49558 / DSM 4304 / JCM 9628 / NBRC 100126 / VC-16).